Reading from the N-terminus, the 114-residue chain is Putative ANKRD40 C-terminal-like protein (114 aa).

This Homo sapiens (Human) protein is Putative ANKRD40 C-terminal-like protein.